Consider the following 83-residue polypeptide: MAKEESIEMQGTVVDSLPNTTFRVKLENGHVVTAHISGRMRKHYIRILTGDAVTVELTPYDLTRGRIVYREAGKKPPTSKAEE.

In terms of domain architecture, S1-like spans 1 to 72 (MAKEESIEMQ…TRGRIVYREA (72 aa)).

This sequence belongs to the IF-1 family. In terms of assembly, component of the 30S ribosomal translation pre-initiation complex which assembles on the 30S ribosome in the order IF-2 and IF-3, IF-1 and N-formylmethionyl-tRNA(fMet); mRNA recruitment can occur at any time during PIC assembly.

Its subcellular location is the cytoplasm. One of the essential components for the initiation of protein synthesis. Stabilizes the binding of IF-2 and IF-3 on the 30S subunit to which N-formylmethionyl-tRNA(fMet) subsequently binds. Helps modulate mRNA selection, yielding the 30S pre-initiation complex (PIC). Upon addition of the 50S ribosomal subunit IF-1, IF-2 and IF-3 are released leaving the mature 70S translation initiation complex. The protein is Translation initiation factor IF-1 of Coxiella burnetii (strain Dugway 5J108-111).